A 421-amino-acid chain; its full sequence is Tyrosine--tRNA ligase (421 aa).

Residue Tyr-38 coordinates L-tyrosine. A 'HIGH' region motif is present at residues 43-52 (PTGDSLHIGH). Residues Tyr-169 and Gln-173 each contribute to the L-tyrosine site. The short motif at 231–235 (KFGKS) is the 'KMSKS' region element. ATP is bound at residue Lys-234. The 67-residue stretch at 353 to 419 (KNLVDFLVDT…GKKKYTLVHI (67 aa)) folds into the S4 RNA-binding domain.

This sequence belongs to the class-I aminoacyl-tRNA synthetase family. TyrS type 1 subfamily. Homodimer.

The protein localises to the cytoplasm. It carries out the reaction tRNA(Tyr) + L-tyrosine + ATP = L-tyrosyl-tRNA(Tyr) + AMP + diphosphate + H(+). Its function is as follows. Catalyzes the attachment of tyrosine to tRNA(Tyr) in a two-step reaction: tyrosine is first activated by ATP to form Tyr-AMP and then transferred to the acceptor end of tRNA(Tyr). The sequence is that of Tyrosine--tRNA ligase from Lactobacillus delbrueckii subsp. bulgaricus (strain ATCC 11842 / DSM 20081 / BCRC 10696 / JCM 1002 / NBRC 13953 / NCIMB 11778 / NCTC 12712 / WDCM 00102 / Lb 14).